We begin with the raw amino-acid sequence, 216 residues long: Peroxiredoxin (216 aa).

Residues 2-158 (VVIGEKFPEV…ILRLVKALKI (157 aa)) enclose the Thioredoxin domain. Cysteine 46 acts as the Cysteine sulfenic acid (-SOH) intermediate in catalysis. Residue arginine 121 participates in substrate binding. An intrachain disulfide couples cysteine 205 to cysteine 211.

Belongs to the peroxiredoxin family. Prx6 subfamily. Homodecamer. Pentamer of dimers that assemble into a ring structure.

It localises to the cytoplasm. It carries out the reaction a hydroperoxide + [thioredoxin]-dithiol = an alcohol + [thioredoxin]-disulfide + H2O. In terms of biological role, thiol-specific peroxidase that catalyzes the reduction of hydrogen peroxide and organic hydroperoxides to water and alcohols, respectively. Plays a role in cell protection against oxidative stress by detoxifying peroxides. The chain is Peroxiredoxin (ahpC) from Pyrococcus horikoshii (strain ATCC 700860 / DSM 12428 / JCM 9974 / NBRC 100139 / OT-3).